Here is a 391-residue protein sequence, read N- to C-terminus: Terminal nucleotidyltransferase 5C (391 aa).

The protein belongs to the TENT family. In terms of assembly, interacts with BCCIP and PABPC1; the interaction has no effect on TENT5C poly(A) polymerase function. Interacts with PLK4; this interaction leads to the TENT5C recruitment into the centrosome.

The protein localises to the nucleus. Its subcellular location is the cytoplasm. The protein resides in the cytoskeleton. It localises to the microtubule organizing center. It is found in the centrosome. It catalyses the reaction RNA(n) + ATP = RNA(n)-3'-adenine ribonucleotide + diphosphate. Catalyzes the transfer of one adenosine molecule from an ATP to an mRNA poly(A) tail bearing a 3'-OH terminal group and enhances mRNA stability and gene expression. Can also elongate RNA oligos ending with uridine molecule, provided that the sequence is adenosine-rich. Mainly targets mRNAs encoding endoplasmic reticulum-targeted protein. This chain is Terminal nucleotidyltransferase 5C, found in Macaca fascicularis (Crab-eating macaque).